Consider the following 491-residue polypeptide: Glutamate--tRNA ligase (491 aa).

Residues proline 13 to asparagine 23 carry the 'HIGH' region motif. Cysteine 110, cysteine 112, cysteine 137, and histidine 139 together coordinate Zn(2+). The short motif at lysine 254 to arginine 258 is the 'KMSKS' region element. Lysine 257 is an ATP binding site.

This sequence belongs to the class-I aminoacyl-tRNA synthetase family. Glutamate--tRNA ligase type 1 subfamily. As to quaternary structure, monomer. Zn(2+) is required as a cofactor.

It is found in the cytoplasm. The enzyme catalyses tRNA(Glu) + L-glutamate + ATP = L-glutamyl-tRNA(Glu) + AMP + diphosphate. Its function is as follows. Catalyzes the attachment of glutamate to tRNA(Glu) in a two-step reaction: glutamate is first activated by ATP to form Glu-AMP and then transferred to the acceptor end of tRNA(Glu). This Listeria welshimeri serovar 6b (strain ATCC 35897 / DSM 20650 / CCUG 15529 / CIP 8149 / NCTC 11857 / SLCC 5334 / V8) protein is Glutamate--tRNA ligase.